We begin with the raw amino-acid sequence, 39 residues long: Decorsin (39 aa).

Residues 27-38 form a high affinity binding domain region; it reads CRFPRGDADPYC. The short motif at 31-33 is the Cell attachment site element; sequence RGD.

It belongs to the ornatin family.

The protein localises to the secreted. Inhibits fibrinogen interaction with platelet receptors expressed on glycoprotein IIb-IIIa complex. May prevent blood from clotting during either feeding and/or storage of ingested blood. This Macrobdella decora (North American leech) protein is Decorsin.